A 491-amino-acid polypeptide reads, in one-letter code: Anhydromuropeptide permease (491 aa).

Residues 1–11 are Cytoplasmic-facing; that stretch reads MSSQYLRIFQQ. The helical transmembrane segment at 12 to 32 threads the bilayer; sequence PRSAILLILGFASGLPLALTS. At 33–47 the chain is on the periplasmic side; that stretch reads GTLQAWMTVENIDLK. A helical transmembrane segment spans residues 48–61; it reads TIGFFSLVGQAYVF. Over 62–81 the chain is Cytoplasmic; that stretch reads KFLWSPLMDRYTPPFFGRRR. The chain crosses the membrane as a helical span at residues 82-105; it reads GWLLATQILLLVAIAAMGFLEPGT. Position 106 (Gln106) is a topological domain, periplasmic. Residues 107 to 124 form a helical membrane-spanning segment; the sequence is LRWMAALAVVIAFCSASQ. The Cytoplasmic segment spans residues 125-221; sequence DIVFDAWKTD…VAPLRDFFGR (97 aa). The chain crosses the membrane as a helical span at residues 222 to 240; that stretch reads NNAWLILLLIVLYKLGDAF. The Periplasmic segment spans residues 241–264; it reads AMSLTTTFLIRGVGFDAGEVGVVN. A helical membrane pass occupies residues 265–284; sequence KTLGLLATIVGALYGGILMQ. At 285-287 the chain is on the cytoplasmic side; sequence RLS. The chain crosses the membrane as a helical span at residues 288–303; it reads LFRALLIFGILQGASN. Residues 304-327 lie on the Periplasmic side of the membrane; the sequence is AGYWLLSITDKHLYSMGAAVFFEN. The helical transmembrane segment at 328–346 threads the bilayer; the sequence is LCGGMGTSAFVALLMTLCN. Topologically, residues 347-421 are cytoplasmic; the sequence is KSFSATQFAL…NDNFISRTAY (75 aa). The helical transmembrane segment at 422–453 threads the bilayer; sequence PAGYAFAMWTLAAGVSLLAVWLLLLTMDALDL. Residues 454–457 lie on the Periplasmic side of the membrane; sequence THFS. A helical membrane pass occupies residues 458–485; sequence FLPALLEVGVLVALSGVVLGGLLDYLAL. Over 486–491 the chain is Cytoplasmic; that stretch reads RKTHLT.

Belongs to the major facilitator superfamily.

It is found in the cell inner membrane. In terms of biological role, permease involved in cell wall peptidoglycan recycling. Transports, from the periplasm into the cytoplasm, the disaccharide N-acetylglucosaminyl-beta-1,4-anhydro-N-acetylmuramic acid (GlcNAc-anhMurNAc) and GlcNAc-anhMurNAc-peptides. Transport is dependent on the proton motive force. This is Anhydromuropeptide permease (ampG) from Escherichia coli O157:H7.